A 266-amino-acid polypeptide reads, in one-letter code: Glutamate racemase (266 aa).

Substrate-binding positions include 10 to 11 and 42 to 43; these read DS and YG. The active-site Proton donor/acceptor is the C73. Substrate is bound at residue 74 to 75; sequence NT. C183 (proton donor/acceptor) is an active-site residue. 184–185 lines the substrate pocket; sequence TH.

It belongs to the aspartate/glutamate racemases family.

It catalyses the reaction L-glutamate = D-glutamate. The protein operates within cell wall biogenesis; peptidoglycan biosynthesis. In terms of biological role, provides the (R)-glutamate required for cell wall biosynthesis. The protein is Glutamate racemase of Lactobacillus johnsonii (strain CNCM I-12250 / La1 / NCC 533).